The following is a 300-amino-acid chain: 33 kDa chaperonin (300 aa).

Intrachain disulfides connect cysteine 235–cysteine 237 and cysteine 269–cysteine 272.

It belongs to the HSP33 family. Post-translationally, under oxidizing conditions two disulfide bonds are formed involving the reactive cysteines. Under reducing conditions zinc is bound to the reactive cysteines and the protein is inactive.

The protein resides in the cytoplasm. Functionally, redox regulated molecular chaperone. Protects both thermally unfolding and oxidatively damaged proteins from irreversible aggregation. Plays an important role in the bacterial defense system toward oxidative stress. The sequence is that of 33 kDa chaperonin from Pseudomonas fluorescens (strain SBW25).